The primary structure comprises 209 residues: Kynurenine formamidase (209 aa).

Residue phenylalanine 18 coordinates substrate. Residues histidine 48, histidine 52, and aspartate 54 each coordinate Zn(2+). Residue histidine 58 is the Proton donor/acceptor of the active site. Positions 160 and 172 each coordinate Zn(2+).

The protein belongs to the Cyclase 1 superfamily. KynB family. Homodimer. It depends on Zn(2+) as a cofactor.

It carries out the reaction N-formyl-L-kynurenine + H2O = L-kynurenine + formate + H(+). It functions in the pathway amino-acid degradation; L-tryptophan degradation via kynurenine pathway; L-kynurenine from L-tryptophan: step 2/2. In terms of biological role, catalyzes the hydrolysis of N-formyl-L-kynurenine to L-kynurenine, the second step in the kynurenine pathway of tryptophan degradation. The polypeptide is Kynurenine formamidase (Bordetella bronchiseptica (strain ATCC BAA-588 / NCTC 13252 / RB50) (Alcaligenes bronchisepticus)).